A 488-amino-acid polypeptide reads, in one-letter code: 3-octaprenyl-4-hydroxybenzoate carboxy-lyase (488 aa).

Asparagine 172 contacts Mn(2+). Prenylated FMN contacts are provided by residues 175–177 (IYR), 189–191 (RWL), and 194–195 (RG). Position 238 (glutamate 238) interacts with Mn(2+). The active-site Proton donor is aspartate 287.

Belongs to the UbiD family. As to quaternary structure, homohexamer. It depends on prenylated FMN as a cofactor. Mn(2+) is required as a cofactor.

It localises to the cell membrane. It carries out the reaction a 4-hydroxy-3-(all-trans-polyprenyl)benzoate + H(+) = a 2-(all-trans-polyprenyl)phenol + CO2. It functions in the pathway cofactor biosynthesis; ubiquinone biosynthesis. Its function is as follows. Catalyzes the decarboxylation of 3-octaprenyl-4-hydroxy benzoate to 2-octaprenylphenol, an intermediate step in ubiquinone biosynthesis. The chain is 3-octaprenyl-4-hydroxybenzoate carboxy-lyase from Legionella pneumophila (strain Paris).